The sequence spans 319 residues: Probable murein peptide carboxypeptidase (319 aa).

Catalysis depends on Ser-116, which acts as the Nucleophile. Catalysis depends on charge relay system residues Glu-214 and His-284.

It belongs to the peptidase S66 family.

The protein localises to the cytoplasm. It participates in cell wall degradation; peptidoglycan degradation. In terms of biological role, may be involved in the degradation of peptidoglycan by catalyzing the cleavage of the terminal D-alanine residue from cytoplasmic murein peptides. This Bacillus subtilis (strain 168) protein is Probable murein peptide carboxypeptidase (ykfA).